The following is a 210-amino-acid chain: C4-dicarboxylate TRAP transporter small permease protein DctQ (210 aa).

A run of 4 helical transmembrane segments spans residues 13 to 33, 77 to 97, 113 to 133, and 160 to 180; these read EGLI…YVVL, ALFA…AGHL, VLGV…CVAS, and IGLI…EILV.

Belongs to the TRAP transporter small permease family. In terms of assembly, the complex comprises the extracytoplasmic solute receptor protein DctP, and the two transmembrane proteins DctQ and DctM.

Its subcellular location is the cell inner membrane. Part of the tripartite ATP-independent periplasmic (TRAP) transport system DctPQM involved in C4-dicarboxylates uptake. The protein is C4-dicarboxylate TRAP transporter small permease protein DctQ of Pseudomonas aeruginosa (strain ATCC 15692 / DSM 22644 / CIP 104116 / JCM 14847 / LMG 12228 / 1C / PRS 101 / PAO1).